We begin with the raw amino-acid sequence, 245 residues long: Eukaryotic translation initiation factor 6 (245 aa).

Belongs to the eIF-6 family. As to quaternary structure, monomer. Associates with the 60S ribosomal subunit.

It is found in the cytoplasm. Its subcellular location is the nucleus. The protein resides in the nucleolus. Binds to the 60S ribosomal subunit and prevents its association with the 40S ribosomal subunit to form the 80S initiation complex in the cytoplasm. May also be involved in ribosome biogenesis. The chain is Eukaryotic translation initiation factor 6 from Drosophila melanogaster (Fruit fly).